We begin with the raw amino-acid sequence, 120 residues long: NADH-quinone oxidoreductase subunit A (120 aa).

Helical transmembrane passes span 6-26, 63-83, and 89-109; these read YGIIAVFLVGGAATAVAALAT, FLYALVFLLFDVETVFLYPWA, and LGLFAFAEMIVFIGILVLGLW.

This sequence belongs to the complex I subunit 3 family. NDH-1 is composed of 14 different subunits. Subunits NuoA, H, J, K, L, M, N constitute the membrane sector of the complex.

It is found in the cell membrane. It catalyses the reaction a quinone + NADH + 5 H(+)(in) = a quinol + NAD(+) + 4 H(+)(out). NDH-1 shuttles electrons from NADH, via FMN and iron-sulfur (Fe-S) centers, to quinones in the respiratory chain. The immediate electron acceptor for the enzyme in this species is believed to be a menaquinone. Couples the redox reaction to proton translocation (for every two electrons transferred, four hydrogen ions are translocated across the cytoplasmic membrane), and thus conserves the redox energy in a proton gradient. This is NADH-quinone oxidoreductase subunit A from Moorella thermoacetica (strain ATCC 39073 / JCM 9320).